Consider the following 156-residue polypeptide: Small ribosomal subunit protein uS7 (156 aa).

It belongs to the universal ribosomal protein uS7 family. Part of the 30S ribosomal subunit. Contacts proteins S9 and S11.

Functionally, one of the primary rRNA binding proteins, it binds directly to 16S rRNA where it nucleates assembly of the head domain of the 30S subunit. Is located at the subunit interface close to the decoding center, probably blocks exit of the E-site tRNA. The sequence is that of Small ribosomal subunit protein uS7 from Finegoldia magna (strain ATCC 29328 / DSM 20472 / WAL 2508) (Peptostreptococcus magnus).